A 110-amino-acid polypeptide reads, in one-letter code: U1-lycotoxin-Ls1jj (110 aa).

Positions 1–20 (MKFVLLFGVLLVTLFSYSSA) are cleaved as a signal peptide. Residues 21 to 44 (EMLDDFDQADEDELLSLIEKEEAR) constitute a propeptide that is removed on maturation. 4 cysteine pairs are disulfide-bonded: Cys47-Cys62, Cys54-Cys71, Cys61-Cys89, and Cys73-Cys87.

The protein belongs to the neurotoxin 19 (CSTX) family. 03 subfamily. Expressed by the venom gland.

Its subcellular location is the secreted. The chain is U1-lycotoxin-Ls1jj from Lycosa singoriensis (Wolf spider).